A 147-amino-acid chain; its full sequence is Hemoglobin subunit beta (147 aa).

The residue at position 2 (Val2) is an N-acetylvaline. The region spanning 3–147 (HLSGEEKSAV…VANALAHKYH (145 aa)) is the Globin domain. The residue at position 13 (Thr13) is a Phosphothreonine. Ser45 is subject to Phosphoserine. Lys60 carries the N6-acetyllysine modification. Position 64 (His64) interacts with heme b. N6-acetyllysine is present on Lys83. His93 is a heme b binding site. Position 94 is an S-nitrosocysteine (Cys94). N6-acetyllysine is present on Lys145.

It belongs to the globin family. As to quaternary structure, heterotetramer of two alpha chains and two beta chains. As to expression, red blood cells.

Its function is as follows. Involved in oxygen transport from the lung to the various peripheral tissues. The sequence is that of Hemoglobin subunit beta (HBB) from Lepus europaeus (European hare).